We begin with the raw amino-acid sequence, 99 residues long: Protein AC150 (99 aa).

The region spanning 38–96 is the Chitin-binding type-2 domain; that stretch reads GFSCYNKPIGVNFPHPTRCDAFYMCVGLNQKLELICPEGFEFDPDVKNCVPISDYGCTA. Cysteine 73 and cysteine 86 are oxidised to a cystine.

It is found in the host nucleus. The protein localises to the virion. Functionally, plays a role in primary oral infection of the host. This Autographa californica nuclear polyhedrosis virus (AcMNPV) protein is Protein AC150.